The following is a 279-amino-acid chain: NADPH-dependent 7-cyano-7-deazaguanine reductase (279 aa).

86-88 (IES) provides a ligand contact to substrate. NADPH is bound at residue 88–89 (SK). C187 functions as the Thioimide intermediate in the catalytic mechanism. The Proton donor role is filled by D194. A substrate-binding site is contributed by 226 to 227 (HE). 255–256 (RG) is a binding site for NADPH.

This sequence belongs to the GTP cyclohydrolase I family. QueF type 2 subfamily. As to quaternary structure, homodimer.

It localises to the cytoplasm. It carries out the reaction 7-aminomethyl-7-carbaguanine + 2 NADP(+) = 7-cyano-7-deazaguanine + 2 NADPH + 3 H(+). It functions in the pathway tRNA modification; tRNA-queuosine biosynthesis. Its function is as follows. Catalyzes the NADPH-dependent reduction of 7-cyano-7-deazaguanine (preQ0) to 7-aminomethyl-7-deazaguanine (preQ1). The polypeptide is NADPH-dependent 7-cyano-7-deazaguanine reductase (Glaesserella parasuis serovar 5 (strain SH0165) (Haemophilus parasuis)).